The primary structure comprises 721 residues: Catalase-peroxidase (721 aa).

Residues 89–212 (WHSAGTYRTG…LAAVQMGLIY (124 aa)) constitute a cross-link (tryptophyl-tyrosyl-methioninium (Trp-Tyr) (with M-238)). H90 acts as the Proton acceptor in catalysis. Residues 212–238 (YVNPEGPNGDPDPFAAAVDIRETFARM) constitute a cross-link (tryptophyl-tyrosyl-methioninium (Tyr-Met) (with W-89)). H253 is a binding site for heme b.

The protein belongs to the peroxidase family. Peroxidase/catalase subfamily. As to quaternary structure, homodimer or homotetramer. It depends on heme b as a cofactor. Post-translationally, formation of the three residue Trp-Tyr-Met cross-link is important for the catalase, but not the peroxidase activity of the enzyme.

The enzyme catalyses H2O2 + AH2 = A + 2 H2O. It carries out the reaction 2 H2O2 = O2 + 2 H2O. Its function is as follows. Bifunctional enzyme with both catalase and broad-spectrum peroxidase activity. The polypeptide is Catalase-peroxidase (Shewanella baltica (strain OS195)).